The sequence spans 105 residues: Met repressor (105 aa).

The protein belongs to the MetJ family. Homodimer.

It localises to the cytoplasm. This regulatory protein, when combined with SAM (S-adenosylmethionine) represses the expression of the methionine regulon and of enzymes involved in SAM synthesis. This is Met repressor from Pasteurella multocida (strain Pm70).